The primary structure comprises 260 residues: Carbonic anhydrase 2 (260 aa).

Serine 2 bears the N-acetylserine mark. Serine 2 bears the Phosphoserine mark. The Alpha-carbonic anhydrase domain maps to 3–259 (HHWGYSKSNG…LKNRKIKASF (257 aa)). Residues 16-39 (WHKEFPIANGDRQSPVDIDTGTAQ) form a disordered region. Histidine 64 (proton donor/acceptor) is an active-site residue. Serine 87 carries the post-translational modification Phosphoserine. Zn(2+)-binding residues include histidine 94, histidine 96, and histidine 119. Serine 165 carries the post-translational modification Phosphoserine. Residue 198–199 (TT) coordinates substrate. Serine 232 is subject to Phosphoserine.

This sequence belongs to the alpha-carbonic anhydrase family. As to quaternary structure, interacts with SLC4A4 and SLC26A6. Interaction with SLC4A7 regulates SLC4A7 transporter activity. The cofactor is Zn(2+).

The protein resides in the cytoplasm. Its subcellular location is the cell membrane. It catalyses the reaction hydrogencarbonate + H(+) = CO2 + H2O. It carries out the reaction urea = cyanamide + H2O. Inhibited by acetazolamide. In terms of biological role, catalyzes the reversible hydration of carbon dioxide. Can also hydrate cyanamide to urea. Involved in the regulation of fluid secretion into the anterior chamber of the eye. Essential for bone resorption and osteoclast differentiation. Contributes to intracellular pH regulation in the duodenal upper villous epithelium during proton-coupled peptide absorption. Stimulates the chloride-bicarbonate exchange activity of SLC26A6. The polypeptide is Carbonic anhydrase 2 (Ca2) (Rattus norvegicus (Rat)).